Reading from the N-terminus, the 366-residue chain is uncharacterized protein (366 aa).

Positions 169 to 280 constitute a PINc domain; the sequence is ILDTSVIIDG…LNKVCELQKV (112 aa). D250 serves as a coordination point for Mg(2+). The TRAM domain maps to 295-356; the sequence is VVLPGEEMNV…LQTAAGRMIF (62 aa).

The protein belongs to the ycf81 family. In the central section; belongs to the PINc/VapC protein family. Mg(2+) serves as cofactor.

Its function is as follows. An RNase. This is an uncharacterized protein from Bacillus subtilis (strain 168).